A 309-amino-acid chain; its full sequence is Homoserine kinase (309 aa).

91–101 (PIGSGLGSSAC) is a binding site for ATP.

It belongs to the GHMP kinase family. Homoserine kinase subfamily.

It is found in the cytoplasm. It catalyses the reaction L-homoserine + ATP = O-phospho-L-homoserine + ADP + H(+). It participates in amino-acid biosynthesis; L-threonine biosynthesis; L-threonine from L-aspartate: step 4/5. In terms of biological role, catalyzes the ATP-dependent phosphorylation of L-homoserine to L-homoserine phosphate. The sequence is that of Homoserine kinase from Yersinia pseudotuberculosis serotype O:1b (strain IP 31758).